The chain runs to 556 residues: Arginine--tRNA ligase (556 aa).

The 'HIGH' region signature appears at 132-142 (ANPTGPIHLGG).

This sequence belongs to the class-I aminoacyl-tRNA synthetase family. Monomer.

The protein localises to the cytoplasm. The enzyme catalyses tRNA(Arg) + L-arginine + ATP = L-arginyl-tRNA(Arg) + AMP + diphosphate. This is Arginine--tRNA ligase from Kocuria rhizophila (strain ATCC 9341 / DSM 348 / NBRC 103217 / DC2201).